The following is a 116-amino-acid chain: Iron-sulfur cluster insertion protein ErpA (116 aa).

Positions 44, 108, and 110 each coordinate iron-sulfur cluster.

Belongs to the HesB/IscA family. In terms of assembly, homodimer. Iron-sulfur cluster is required as a cofactor.

Functionally, required for insertion of 4Fe-4S clusters for at least IspG. The sequence is that of Iron-sulfur cluster insertion protein ErpA from Shewanella loihica (strain ATCC BAA-1088 / PV-4).